We begin with the raw amino-acid sequence, 210 residues long: Inner membrane-spanning protein YciB (210 aa).

6 helical membrane-spanning segments follow: residues 12 to 32, 53 to 73, 78 to 98, 115 to 135, 148 to 168, and 175 to 195; these read EVSPLLKLVLELGPLMVFFFA, IFIATGLFMAATAAALIASWI, LPMMPLVSGIVVFVFGALTLW, LFGAILLGGLLFGKSLLGYVF, KLTIRWGVFFLFLAVLNEVIW, and FWVAFKVWGTMPITILFTLAQ.

It belongs to the YciB family.

It is found in the cell inner membrane. Plays a role in cell envelope biogenesis, maintenance of cell envelope integrity and membrane homeostasis. The sequence is that of Inner membrane-spanning protein YciB from Rhizobium meliloti (strain 1021) (Ensifer meliloti).